The sequence spans 156 residues: Flagellar assembly factor FliW (156 aa).

Belongs to the FliW family. In terms of assembly, interacts with translational regulator CsrA and flagellin(s).

The protein localises to the cytoplasm. Its function is as follows. Acts as an anti-CsrA protein, binds CsrA and prevents it from repressing translation of its target genes, one of which is flagellin. Binds to flagellin and participates in the assembly of the flagellum. The polypeptide is Flagellar assembly factor FliW (Syntrophomonas wolfei subsp. wolfei (strain DSM 2245B / Goettingen)).